Consider the following 229-residue polypeptide: Uracil-DNA glycosylase (229 aa).

The Proton acceptor role is filled by aspartate 72.

It belongs to the uracil-DNA glycosylase (UDG) superfamily. UNG family.

The protein resides in the cytoplasm. It catalyses the reaction Hydrolyzes single-stranded DNA or mismatched double-stranded DNA and polynucleotides, releasing free uracil.. Excises uracil residues from the DNA which can arise as a result of misincorporation of dUMP residues by DNA polymerase or due to deamination of cytosine. The polypeptide is Uracil-DNA glycosylase (Dichelobacter nodosus (strain VCS1703A)).